The chain runs to 219 residues: Small ribosomal subunit protein uS3 (219 aa).

Residues 38-106 (VRKFVKTKLQ…QVAVNIVEVK (69 aa)) enclose the KH type-2 domain.

It belongs to the universal ribosomal protein uS3 family. In terms of assembly, part of the 30S ribosomal subunit. Forms a tight complex with proteins S10 and S14.

Functionally, binds the lower part of the 30S subunit head. Binds mRNA in the 70S ribosome, positioning it for translation. The protein is Small ribosomal subunit protein uS3 of Desulfitobacterium hafniense (strain DSM 10664 / DCB-2).